Here is a 245-residue protein sequence, read N- to C-terminus: UDP-N-acetyl-D-mannosaminuronic acid transferase (245 aa).

The protein belongs to the glycosyltransferase 26 family.

The catalysed reaction is UDP-N-acetyl-alpha-D-mannosaminouronate + N-acetyl-alpha-D-glucosaminyl-di-trans,octa-cis-undecaprenyl diphosphate = beta-D-ManNAcA-(1-&gt;4)-alpha-D-GlcNAc-di-trans,octa-cis-undecaprenyl diphosphate + UDP + H(+). Its pathway is bacterial outer membrane biogenesis; enterobacterial common antigen biosynthesis. Catalyzes the synthesis of Und-PP-GlcNAc-ManNAcA (Lipid II), the second lipid-linked intermediate involved in enterobacterial common antigen (ECA) synthesis. The chain is UDP-N-acetyl-D-mannosaminuronic acid transferase from Photorhabdus laumondii subsp. laumondii (strain DSM 15139 / CIP 105565 / TT01) (Photorhabdus luminescens subsp. laumondii).